We begin with the raw amino-acid sequence, 159 residues long: Peptide methionine sulfoxide reductase MsrB (159 aa).

In terms of domain architecture, MsrB spans 14–137 (TEKLKENLTE…NSASLKFIAK (124 aa)). Catalysis depends on Cys-126, which acts as the Nucleophile.

It belongs to the MsrB Met sulfoxide reductase family.

The enzyme catalyses L-methionyl-[protein] + [thioredoxin]-disulfide + H2O = L-methionyl-(R)-S-oxide-[protein] + [thioredoxin]-dithiol. The protein is Peptide methionine sulfoxide reductase MsrB of Hathewaya histolytica (Clostridium histolyticum).